A 434-amino-acid chain; its full sequence is MDSVEKGAATSVSNPRGRPSRGRPPKLQRNSRGGQGRGVEKPPHMAALILARGGSKGIPLKNIKHLAGVPLIGWVLRAALDSGVFQSIWVSTDHDEIENVAKQFGAQVHRRSSEASKDSSTSLDAIIEFLNYHNEVDIVGNIQATSPCLHPTDLQKVAEMIREEGYDSVFSVVRRHQFRWGEIQKGVREMTEPLNLNPAKRPRRQDWDGELYENGSFYFAKRHLIEMGYLQGGKMAYYEMRAEHSVDIDVDIDWPIAEQRVLRYGYFGKEKLKEIKLFVCNIDGCLTNGHIYVSGDQKEIISYDVKDAIGISLLKKSGIEVRLISERACSKQTLSSLKLDCKMEVNVPDKLAVVDEWRKEMGLCWKEVAYLGNEVSDEECLKKVGLSGVPADACAAAQKAVGYICKSSGGRGALREFAEHIFLLMEKVINSCQK.

Position 1 is an N-acetylmethionine (methionine 1). The disordered stretch occupies residues 1–42 (MDSVEKGAATSVSNPRGRPSRGRPPKLQRNSRGGQGRGVEKP). The BC1 motif motif lies at 15 to 31 (PRGRPSRGRPPKLQRNS). An omega-N-methylarginine mark is found at arginine 37 and arginine 52. Substrate is bound by residues arginine 52, asparagine 62, arginine 111, serine 120, serine 122, and glutamine 143. Positions 200–206 (KRPRRQD) match the BC2 motif motif. Residue arginine 201 is part of the active site. Residues 269–276 (KEKLKEIK) carry the BC3 motif motif.

It belongs to the CMP-NeuNAc synthase family. Homotetramer; the active enzyme is formed by a dimer of dimers.

The protein resides in the nucleus. The catalysed reaction is an N-acylneuraminate + CTP = a CMP-N-acyl-beta-neuraminate + diphosphate. It functions in the pathway amino-sugar metabolism; N-acetylneuraminate metabolism. Its function is as follows. Catalyzes the activation of N-acetylneuraminic acid (NeuNAc) to cytidine 5'-monophosphate N-acetylneuraminic acid (CMP-NeuNAc), a substrate required for the addition of sialic acid. Has some activity toward NeuNAc, N-glycolylneuraminic acid (Neu5Gc) or 2-keto-3-deoxy-D-glycero-D-galacto-nononic acid (KDN). In Bos taurus (Bovine), this protein is N-acylneuraminate cytidylyltransferase (CMAS).